Consider the following 565-residue polypeptide: Sensor histidine kinase MtrB (565 aa).

A compositionally biased stretch (basic residues) spans 1–13; the sequence is MMWGSRRRTRSRW. The disordered stretch occupies residues 1-21; sequence MMWGSRRRTRSRWGRSGPMTR. 2 consecutive transmembrane segments (helical) span residues 42–62 and 213–233; these read VVAL…FVLT and GTMI…ALLV. The region spanning 235–287 is the HAMP domain; that stretch reads RQVVVPVRSASRIAERFAEGHLSERMPVRGEDDMARLAMSFNDMAESLSRQIT. The Histidine kinase domain maps to 302–519; that stretch reads DVSHELRTPL…CFRLTLPLVR (218 aa). A Phosphohistidine; by autocatalysis modification is found at histidine 305. The tract at residues 524–565 is disordered; it reads TTSPLPMKPIPQPSPSGGQSPSTGPQHAKDRARQREHAERSL. A compositionally biased stretch (low complexity) spans 538–549; that stretch reads PSGGQSPSTGPQ. The segment covering 550-565 has biased composition (basic and acidic residues); the sequence is HAKDRARQREHAERSL.

The protein resides in the cell membrane. It carries out the reaction ATP + protein L-histidine = ADP + protein N-phospho-L-histidine.. In terms of biological role, member of the two-component regulatory system MtrA/MtrB. Seems to function as a membrane-associated protein kinase that phosphorylates MtrA in response to environmental signals. The polypeptide is Sensor histidine kinase MtrB (mtrB) (Mycolicibacterium paratuberculosis (strain ATCC BAA-968 / K-10) (Mycobacterium paratuberculosis)).